The chain runs to 267 residues: Proteasome subunit alpha (267 aa).

The disordered stretch occupies residues E231–D267. Residues L234–D267 show a composition bias toward basic and acidic residues.

The protein belongs to the peptidase T1A family. The 20S proteasome core is composed of 14 alpha and 14 beta subunits that assemble into four stacked heptameric rings, resulting in a barrel-shaped structure. The two inner rings, each composed of seven catalytic beta subunits, are sandwiched by two outer rings, each composed of seven alpha subunits. The catalytic chamber with the active sites is on the inside of the barrel. Has a gated structure, the ends of the cylinder being occluded by the N-termini of the alpha-subunits. Is capped by the proteasome-associated ATPase, ARC.

Its subcellular location is the cytoplasm. The protein operates within protein degradation; proteasomal Pup-dependent pathway. The formation of the proteasomal ATPase ARC-20S proteasome complex, likely via the docking of the C-termini of ARC into the intersubunit pockets in the alpha-rings, may trigger opening of the gate for substrate entry. Interconversion between the open-gate and close-gate conformations leads to a dynamic regulation of the 20S proteasome proteolysis activity. In terms of biological role, component of the proteasome core, a large protease complex with broad specificity involved in protein degradation. The polypeptide is Proteasome subunit alpha (Mycobacterium marinum (strain ATCC BAA-535 / M)).